Reading from the N-terminus, the 145-residue chain is D-aminoacyl-tRNA deacylase (145 aa).

Residues glycine 137–proline 138 carry the Gly-cisPro motif, important for rejection of L-amino acids motif.

It belongs to the DTD family. Homodimer.

It localises to the cytoplasm. The catalysed reaction is glycyl-tRNA(Ala) + H2O = tRNA(Ala) + glycine + H(+). It catalyses the reaction a D-aminoacyl-tRNA + H2O = a tRNA + a D-alpha-amino acid + H(+). Functionally, an aminoacyl-tRNA editing enzyme that deacylates mischarged D-aminoacyl-tRNAs. Also deacylates mischarged glycyl-tRNA(Ala), protecting cells against glycine mischarging by AlaRS. Acts via tRNA-based rather than protein-based catalysis; rejects L-amino acids rather than detecting D-amino acids in the active site. By recycling D-aminoacyl-tRNA to D-amino acids and free tRNA molecules, this enzyme counteracts the toxicity associated with the formation of D-aminoacyl-tRNA entities in vivo and helps enforce protein L-homochirality. In Brevibacillus brevis (strain 47 / JCM 6285 / NBRC 100599), this protein is D-aminoacyl-tRNA deacylase.